The sequence spans 205 residues: NADH-quinone oxidoreductase subunit J (205 aa).

The next 5 membrane-spanning stretches (helical) occupy residues 1 to 21, 26 to 46, 54 to 74, 89 to 109, and 142 to 162; these read MPIF…CVVL, VYSV…MILL, LLIV…IMML, LSLS…TIIL, and FMLP…SCIT.

This sequence belongs to the complex I subunit 6 family.

Its subcellular location is the cell membrane. The enzyme catalyses a quinone + NADH + 5 H(+)(in) = a quinol + NAD(+) + 4 H(+)(out). In terms of biological role, NDH-1 shuttles electrons from NADH, via FMN and iron-sulfur (Fe-S) centers, to quinones in the respiratory chain. Couples the redox reaction to proton translocation (for every two electrons transferred, four hydrogen ions are translocated across the cytoplasmic membrane), and thus conserves the redox energy in a proton gradient. The polypeptide is NADH-quinone oxidoreductase subunit J (nuoJ) (Rickettsia prowazekii (strain Madrid E)).